A 202-amino-acid chain; its full sequence is dITP/XTP pyrophosphatase (202 aa).

Position 7–12 (7–12 (TTNEGK)) interacts with substrate. Glutamate 37 and aspartate 66 together coordinate Mg(2+). The active-site Proton acceptor is aspartate 66. Residues serine 67, 155 to 158 (FGYD), lysine 178, and 183 to 184 (HR) each bind substrate.

The protein belongs to the HAM1 NTPase family. In terms of assembly, homodimer. Mg(2+) serves as cofactor.

The catalysed reaction is XTP + H2O = XMP + diphosphate + H(+). It catalyses the reaction dITP + H2O = dIMP + diphosphate + H(+). It carries out the reaction ITP + H2O = IMP + diphosphate + H(+). In terms of biological role, pyrophosphatase that catalyzes the hydrolysis of nucleoside triphosphates to their monophosphate derivatives, with a high preference for the non-canonical purine nucleotides XTP (xanthosine triphosphate), dITP (deoxyinosine triphosphate) and ITP. Seems to function as a house-cleaning enzyme that removes non-canonical purine nucleotides from the nucleotide pool, thus preventing their incorporation into DNA/RNA and avoiding chromosomal lesions. This Aquifex aeolicus (strain VF5) protein is dITP/XTP pyrophosphatase.